A 1558-amino-acid polypeptide reads, in one-letter code: Hybrid PKS-NRPS synthetase TAS1 (1558 aa).

The segment at 27 to 392 is condensation (C) domain; that stretch reads YPMTKAQESL…RGLETPRAQV (366 aa). The segment at 522 to 919 is adenylation (A) domain; it reads TYKELNERSN…TITDVMPEVT (398 aa). The segment at 995–1028 is disordered; that stretch reads TSGSSSSATPSLVSSGSTTCRSPSTSSCSDSRSA. A Carrier domain is found at 1027-1104; the sequence is SASPAITSAV…GQVDLLCGSE (78 aa). Position 1063 is an O-(pantetheine 4'-phosphoryl)serine (Ser1063). The disordered stretch occupies residues 1116–1144; that stretch reads LGRGRTKSPAKIVDSQGRSSPSTIPSGGR. Positions 1131–1140 are enriched in polar residues; sequence QGRSSPSTIP. One can recognise a Ketosynthase family 3 (KS3) domain in the interval 1145–1558; that stretch reads KSEIAIVGIS…GVNAHCVLRS (414 aa). Residues Cys1308, His1444, and Asn1484 each act as for beta-ketoacyl synthase activity in the active site.

It in the N-terminal section; belongs to the NRP synthetase family. Pantetheine 4'-phosphate serves as cofactor.

The catalysed reaction is acetoacetyl-CoA + L-isoleucine + ATP = tenuazonic acid + AMP + diphosphate + CoA + 2 H(+). Hybrid PKS-NRPS synthetase that mediates the biosynthesis of the toxin tenuazonic acid (TeA), an inhibitor of protein biosynthesis on ribosomes by suppressing the release of new protein. TAS1 alone is sufficient for TeA synthesis via the condensation of isoleucine (Ile) with acetoacetyl-CoA by the N-terminal NRPS module and subsequent cyclization conducted by the C-terminal KS domain. In Gloeophyllum trabeum (strain ATCC 11539 / FP-39264 / Madison 617) (Brown rot fungus), this protein is Hybrid PKS-NRPS synthetase TAS1.